We begin with the raw amino-acid sequence, 40 residues long: Photosystem II reaction center protein J (40 aa).

The chain crosses the membrane as a helical span at residues 8-28 (IPLWLIGTVTGIIVIGLIGIF).

The protein belongs to the PsbJ family. As to quaternary structure, PSII is composed of 1 copy each of membrane proteins PsbA, PsbB, PsbC, PsbD, PsbE, PsbF, PsbH, PsbI, PsbJ, PsbK, PsbL, PsbM, PsbT, PsbX, PsbY, PsbZ, Psb30/Ycf12, at least 3 peripheral proteins of the oxygen-evolving complex and a large number of cofactors. It forms dimeric complexes.

It is found in the plastid. The protein resides in the chloroplast thylakoid membrane. Its function is as follows. One of the components of the core complex of photosystem II (PSII). PSII is a light-driven water:plastoquinone oxidoreductase that uses light energy to abstract electrons from H(2)O, generating O(2) and a proton gradient subsequently used for ATP formation. It consists of a core antenna complex that captures photons, and an electron transfer chain that converts photonic excitation into a charge separation. This chain is Photosystem II reaction center protein J, found in Piper cenocladum (Ant piper).